A 260-amino-acid chain; its full sequence is Putative ATP-binding protein BAB2_1147 (260 aa).

In terms of domain architecture, ABC transporter spans 5-228; it reads ISFNNVVMRY…DLPYPRTEAI (224 aa). Position 37–44 (37–44) interacts with ATP; that stretch reads GPSGCGKS.

It belongs to the ABC transporter superfamily. The complex is composed of two ATP-binding proteins (BAB2_1147), two transmembrane proteins (BAB2_1148) and a solute-binding protein (BAB2_1146).

It is found in the cell inner membrane. In terms of biological role, probably part of an ABC transporter complex. Probably Responsible for energy coupling to the transport system. The chain is Putative ATP-binding protein BAB2_1147 from Brucella abortus (strain 2308).